Here is a 550-residue protein sequence, read N- to C-terminus: Chaperonin GroEL (550 aa).

ATP-binding positions include 30-33 (TLGP), K51, 87-91 (DGTTT), G415, 479-481 (NAA), and D495.

This sequence belongs to the chaperonin (HSP60) family. Forms a cylinder of 14 subunits composed of two heptameric rings stacked back-to-back. Interacts with the co-chaperonin GroES.

It is found in the cytoplasm. It catalyses the reaction ATP + H2O + a folded polypeptide = ADP + phosphate + an unfolded polypeptide.. Its function is as follows. Together with its co-chaperonin GroES, plays an essential role in assisting protein folding. The GroEL-GroES system forms a nano-cage that allows encapsulation of the non-native substrate proteins and provides a physical environment optimized to promote and accelerate protein folding. The polypeptide is Chaperonin GroEL (Aromatoleum aromaticum (strain DSM 19018 / LMG 30748 / EbN1) (Azoarcus sp. (strain EbN1))).